The primary structure comprises 185 residues: uncharacterized protein (185 aa).

Belongs to the PIGL family.

This is an uncharacterized protein from Escherichia coli (strain K12).